The following is a 435-amino-acid chain: Glucan 1,3-beta-glucosidase (435 aa).

An N-terminal signal peptide occupies residues 1–30; that stretch reads MLFPVLHLPKAMKFSSFSLIASSLLSLVAA. Glu222 (proton donor) is an active-site residue. 2 disulfide bridges follow: Cys306/Cys432 and Cys331/Cys357. Catalysis depends on Glu323, which acts as the Nucleophile.

The protein belongs to the glycosyl hydrolase 5 (cellulase A) family.

The protein localises to the secreted. It catalyses the reaction Successive hydrolysis of beta-D-glucose units from the non-reducing ends of (1-&gt;3)-beta-D-glucans, releasing alpha-glucose.. Its function is as follows. Beta-glucanases participate in the metabolism of beta-glucan, the main structural component of the cell wall. It could also function biosynthetically as a transglycosylase. In Pichia angusta (Yeast), this protein is Glucan 1,3-beta-glucosidase.